We begin with the raw amino-acid sequence, 834 residues long: Probable basic-leucine zipper transcription factor D (834 aa).

The segment at N83–E160 is disordered. The segment covering D90–E111 has biased composition (polar residues). The segment covering D119–S157 has biased composition (low complexity). A coiled-coil region spans residues S211–Q246. Positions V378–A405 are disordered. Residues N391–S454 enclose the bZIP domain. The tract at residues K393–R402 is basic motif. Residues L407–I414 form a leucine-zipper region. 2 disordered regions span residues N455–S504 and L550–Q712. A compositionally biased stretch (polar residues) spans L550–L595. Low complexity-rich tracts occupy residues N616–N651 and T694–T707.

Belongs to the bZIP family.

Its subcellular location is the nucleus. Functionally, probable transcriptional regulator. This Dictyostelium discoideum (Social amoeba) protein is Probable basic-leucine zipper transcription factor D (bzpD).